The chain runs to 431 residues: MQLNSNGWHVDDHIVVAVSTGIDSMCLLYQLLNDYKDSYRKLTCLHVNHGVRSASIEEARFLEVYCERHHIDLHIKKLDLSHSLDRNNSIQNEARIKRYEWFDEMMNVLEADVLLTAHHLDDQLETIMYRIFNGKSTRNKLGFDELSKRKGYQIYRPLLAVSKKEIKQFQERYHIPYFEDESNKDNKYVRNDIRNRIIPAIDENNQLKASHLLKLKQWHDEQYDILQYSAKQFIQEFVKFDEQSKYLEVSRQAFNNLPNSLKMVVLDCLLSKYYELFNISAKTYEEWFKQFSSKKAQFSINLTDKWIIQIAYGKLIIMAKNNGDTYFRVQTIEKPGNYIFNKYRLEIHSNLPKCLFPLTVRTRQSGDTFKLNGRDGYKKVNRLFIDCKVQQWVRDQMPIVLDKQQRIIAVGDLYQQQTIKQWIIISKNGDE.

19 to 24 contributes to the ATP binding site; sequence STGIDS.

This sequence belongs to the tRNA(Ile)-lysidine synthase family.

The protein resides in the cytoplasm. The enzyme catalyses cytidine(34) in tRNA(Ile2) + L-lysine + ATP = lysidine(34) in tRNA(Ile2) + AMP + diphosphate + H(+). In terms of biological role, ligates lysine onto the cytidine present at position 34 of the AUA codon-specific tRNA(Ile) that contains the anticodon CAU, in an ATP-dependent manner. Cytidine is converted to lysidine, thus changing the amino acid specificity of the tRNA from methionine to isoleucine. The sequence is that of tRNA(Ile)-lysidine synthase from Staphylococcus aureus (strain MW2).